A 505-amino-acid polypeptide reads, in one-letter code: Trans-cinnamate 4-monooxygenase (505 aa).

A helical transmembrane segment spans residues 3 to 23 (LLLLEKTLLGLFLAAVVAIVV). (E)-cinnamate is bound by residues 213–218 (RSRLAQ) and Ala306. Heme is bound at residue Cys447.

It belongs to the cytochrome P450 family. Heme is required as a cofactor.

The protein localises to the membrane. The enzyme catalyses (E)-cinnamate + reduced [NADPH--hemoprotein reductase] + O2 = (E)-4-coumarate + oxidized [NADPH--hemoprotein reductase] + H2O + H(+). The protein operates within phenylpropanoid metabolism; trans-4-coumarate biosynthesis; trans-4-coumarate from trans-cinnamate: step 1/1. In terms of biological role, catalyzes the first oxidative step of the phenylpropanoid pathway in higher plants by transforming trans-cinnamate into p-coumarate. The compounds formed by this pathway are essential components for lignification, pollination, and defense against ultraviolet light, predators and pathogens. This Vigna radiata var. radiata (Mung bean) protein is Trans-cinnamate 4-monooxygenase (CYP73A2).